The following is a 339-amino-acid chain: Dihydroorotate dehydrogenase (quinone) (339 aa).

Residues 62-66 and Thr-86 each bind FMN; that span reads AGLDK. A substrate-binding site is contributed by Lys-66. 111-115 provides a ligand contact to substrate; it reads NRMGF. 2 residues coordinate FMN: Asn-139 and Asn-172. Asn-172 lines the substrate pocket. Ser-175 acts as the Nucleophile in catalysis. Asn-177 lines the substrate pocket. 2 residues coordinate FMN: Lys-217 and Thr-245. Position 246 to 247 (246 to 247) interacts with substrate; sequence NT. Residues Gly-268, Gly-297, and 318-319 each bind FMN; that span reads YS.

This sequence belongs to the dihydroorotate dehydrogenase family. Type 2 subfamily. As to quaternary structure, monomer. FMN is required as a cofactor.

It is found in the cell membrane. The catalysed reaction is (S)-dihydroorotate + a quinone = orotate + a quinol. It functions in the pathway pyrimidine metabolism; UMP biosynthesis via de novo pathway; orotate from (S)-dihydroorotate (quinone route): step 1/1. Catalyzes the conversion of dihydroorotate to orotate with quinone as electron acceptor. This chain is Dihydroorotate dehydrogenase (quinone), found in Shewanella frigidimarina (strain NCIMB 400).